The primary structure comprises 490 residues: GTPase Der (490 aa).

The EngA-type G 1 domain occupies 3–166; it reads PVIALVGRPN…IALSEFPKDD (164 aa). Residues 9–16, 56–60, and 118–121 contribute to the GTP site; these read GRPNVGKS, DTGGI, and NKVD. The segment at 164–191 is disordered; the sequence is KDDADEPEEGEEEIVAEGEEAKRIPGPS. The span at 166–181 shows a compositional bias: acidic residues; that stretch reads DADEPEEGEEEIVAEG. Residues 182–191 are compositionally biased toward basic and acidic residues; it reads EEAKRIPGPS. Residues 196 to 369 enclose the EngA-type G 2 domain; it reads IKIAIIGRPN…SVQNSFKSAV (174 aa). GTP-binding positions include 202-209, 249-253, and 314-317; these read GRPNVGKS, DTAGV, and NKWD. The KH-like domain occupies 370–454; sequence TRWPTSRLTQ…PIRIEFKGGE (85 aa). Positions 452 to 490 are disordered; sequence GGENPYEGNKNTLTDRQVNKKRRLMSHHKKADKKRRDKR. Basic residues predominate over residues 470–490; the sequence is NKKRRLMSHHKKADKKRRDKR.

It belongs to the TRAFAC class TrmE-Era-EngA-EngB-Septin-like GTPase superfamily. EngA (Der) GTPase family. In terms of assembly, associates with the 50S ribosomal subunit.

In terms of biological role, GTPase that plays an essential role in the late steps of ribosome biogenesis. The chain is GTPase Der from Pseudomonas fluorescens (strain ATCC BAA-477 / NRRL B-23932 / Pf-5).